The sequence spans 232 residues: 2,3-bisphosphoglycerate-dependent phosphoglycerate mutase (232 aa).

Substrate-binding positions include 8–15 (RHGESLWN), 21–22 (TG), arginine 60, 87–90 (ERHY), lysine 98, 114–115 (RR), and 183–184 (GN). Catalysis depends on histidine 9, which acts as the Tele-phosphohistidine intermediate. The active-site Proton donor/acceptor is the glutamate 87.

The protein belongs to the phosphoglycerate mutase family. BPG-dependent PGAM subfamily.

It carries out the reaction (2R)-2-phosphoglycerate = (2R)-3-phosphoglycerate. Its pathway is carbohydrate degradation; glycolysis; pyruvate from D-glyceraldehyde 3-phosphate: step 3/5. Catalyzes the interconversion of 2-phosphoglycerate and 3-phosphoglycerate. This Clostridium beijerinckii (strain ATCC 51743 / NCIMB 8052) (Clostridium acetobutylicum) protein is 2,3-bisphosphoglycerate-dependent phosphoglycerate mutase.